A 234-amino-acid chain; its full sequence is Ion-translocating oxidoreductase complex subunit E (234 aa).

5 helical membrane-spanning segments follow: residues 62-82, 92-112, 116-136, 151-171, and 205-225; these read LGLG…ISLF, IPIY…LMNA, TLYQ…IIIG, IWDG…LGAL, and SFLL…LLAI.

Belongs to the NqrDE/RnfAE family. The complex is composed of six subunits: RnfA, RnfB, RnfC, RnfD, RnfE and RnfG.

It is found in the cell inner membrane. Part of a membrane-bound complex that couples electron transfer with translocation of ions across the membrane. In Haemophilus influenzae (strain PittGG), this protein is Ion-translocating oxidoreductase complex subunit E.